Consider the following 247-residue polypeptide: MIKLVLLRHGESQWNRENRFTGWHDIDLTENGRNEAFQAGRLMKEAGLVFDMAYTSVLKRAIRTLWNAMDSMDLMWISVFKSWRLNERHYGALQGLNKSETSRKYGEEQVLVWRRSYDTPPPLLEKSDARYPGTDPRYGDLSEAEIPLSECLKDTVERFLPIWHETIAPQLRKGKRVIIVAHGNSLRALVKYLDNISEEDIVGLNIPTGIPLVYELDDDLKPLKNYYLGDQEALKKAVDAVAGQSKA.

Residues 8-15, 21-22, arginine 60, 87-90, lysine 98, 114-115, and 183-184 each bind substrate; these read RHGESQWN, TG, ERHY, RR, and GN. Residue histidine 9 is the Tele-phosphohistidine intermediate of the active site. Residue glutamate 87 is the Proton donor/acceptor of the active site.

It belongs to the phosphoglycerate mutase family. BPG-dependent PGAM subfamily.

It carries out the reaction (2R)-2-phosphoglycerate = (2R)-3-phosphoglycerate. It functions in the pathway carbohydrate degradation; glycolysis; pyruvate from D-glyceraldehyde 3-phosphate: step 3/5. In terms of biological role, catalyzes the interconversion of 2-phosphoglycerate and 3-phosphoglycerate. This chain is 2,3-bisphosphoglycerate-dependent phosphoglycerate mutase, found in Chlorobium phaeobacteroides (strain DSM 266 / SMG 266 / 2430).